The following is a 277-amino-acid chain: Ras suppressor protein 1 (277 aa).

The tract at residues 1–23 (MSKSLKKLVEESREKNQPEVDMS) is disordered. Serine 2 is subject to N-acetylserine. Residues 7–23 (KLVEESREKNQPEVDMS) are compositionally biased toward basic and acidic residues. 7 LRR repeats span residues 41–63 (HITQ…AELK), 64–85 (NLEV…ISSL), 87–108 (KLKH…FGSS), 110–133 (LLEV…FFYL), 135–156 (TLRA…IGKL), 158–179 (KLQI…IGEL), and 181–202 (QLKE…LGNL). Residues 250-277 (MQANPEPPKKNNDKSKKISRKPLAAKNK) form a disordered region. A compositionally biased stretch (basic and acidic residues) spans 256 to 265 (PPKKNNDKSK).

Potentially plays a role in the Ras signal transduction pathway. Capable of suppressing v-Ras transformation in vitro. This is Ras suppressor protein 1 (Rsu1) from Mus musculus (Mouse).